A 107-amino-acid polypeptide reads, in one-letter code: Death-associated protein-like 1 (107 aa).

The tract at residues Met1–Gly23 is disordered.

As to expression, expressed in hair follicle (at protein level).

In terms of biological role, may play a role in the early stages of epithelial differentiation or in apoptosis. The protein is Death-associated protein-like 1 (DAPL1) of Homo sapiens (Human).